The sequence spans 82 residues: Translational regulator CsrA (82 aa).

It belongs to the CsrA/RsmA family. As to quaternary structure, homodimer; the beta-strands of each monomer intercalate to form a hydrophobic core, while the alpha-helices form wings that extend away from the core.

It localises to the cytoplasm. Its function is as follows. A translational regulator that binds mRNA to regulate translation initiation and/or mRNA stability. Usually binds in the 5'-UTR at or near the Shine-Dalgarno sequence preventing ribosome-binding, thus repressing translation. Its main target seems to be the major flagellin gene, while its function is anatagonized by FliW. The chain is Translational regulator CsrA from Geobacillus sp. (strain WCH70).